The following is a 373-amino-acid chain: Queuine tRNA-ribosyltransferase (373 aa).

Asp94 (proton acceptor) is an active-site residue. Substrate is bound by residues Asp94 to Phe98, Asp148, Gln190, and Gly217. The RNA binding stretch occupies residues Gly248–Cys254. Asp267 acts as the Nucleophile in catalysis. The segment at Thr272–Arg276 is RNA binding; important for wobble base 34 recognition. Zn(2+) is bound by residues Cys305, Cys307, Cys310, and His336.

The protein belongs to the queuine tRNA-ribosyltransferase family. In terms of assembly, homodimer. Within each dimer, one monomer is responsible for RNA recognition and catalysis, while the other monomer binds to the replacement base PreQ1. The cofactor is Zn(2+).

It catalyses the reaction 7-aminomethyl-7-carbaguanine + guanosine(34) in tRNA = 7-aminomethyl-7-carbaguanosine(34) in tRNA + guanine. Its pathway is tRNA modification; tRNA-queuosine biosynthesis. In terms of biological role, catalyzes the base-exchange of a guanine (G) residue with the queuine precursor 7-aminomethyl-7-deazaguanine (PreQ1) at position 34 (anticodon wobble position) in tRNAs with GU(N) anticodons (tRNA-Asp, -Asn, -His and -Tyr). Catalysis occurs through a double-displacement mechanism. The nucleophile active site attacks the C1' of nucleotide 34 to detach the guanine base from the RNA, forming a covalent enzyme-RNA intermediate. The proton acceptor active site deprotonates the incoming PreQ1, allowing a nucleophilic attack on the C1' of the ribose to form the product. After dissociation, two additional enzymatic reactions on the tRNA convert PreQ1 to queuine (Q), resulting in the hypermodified nucleoside queuosine (7-(((4,5-cis-dihydroxy-2-cyclopenten-1-yl)amino)methyl)-7-deazaguanosine). The polypeptide is Queuine tRNA-ribosyltransferase (Moorella thermoacetica (strain ATCC 39073 / JCM 9320)).